The following is a 594-amino-acid chain: E3 ubiquitin-protein ligase TRAF7 (594 aa).

Positions 1–33 (MPPINTPRRSDSAISVRSLHSESSMSLRSTFSL) are disordered. 2 positions are modified to phosphoserine: S12 and S15. The span at 15 to 29 (SVRSLHSESSMSLRS) shows a compositional bias: low complexity. Residues 55–89 (CQLCCSVFKDPVITTCGHTFCRRCALKSEKCPVDN) form an RING-type zinc finger. A TRAF-type zinc finger spans residues 146-216 (HESSCDYRPV…RFEGLKEFLQ (71 aa)). 7 WD repeats span residues 318–357 (GHQGPVWCLCVYSMGDLLFSGSSDKTIKVWDTCTTYKCQK), 361–398 (GHDGIVLALCIQGCKLYSGSADCTIIVWDIQNLQKVNT), 401–437 (AHDNPVCTLVSSHNMLFSGSLKAIKVWDIVGTELKLK), 439–478 (ELTGLNHWVRALVAAQSYLYSGSYQTIKIWDIRTLDCIHV), 481–518 (TSGGSVYSIAVTNHHIVCGTYENLIHVWDIESKEQVRT), 521–562 (GHVG…CTQT), and 565–593 (RHQGSVTALAVSRGRLFSGAVDSTVKVWT).

This sequence belongs to the WD repeat TRAF7 family. In terms of assembly, homodimer. Interacts with MAP3K3 and promotes the kinase activity of this enzyme. In terms of processing, phosphorylated by MAP3K3. Ubiquitinates itself upon phosphorylation. As to expression, ubiquitously expressed. Expression is relatively high in heart, liver, kidney, testis, prostate, thyroid, and salivary gland.

The protein localises to the cytoplasmic vesicle. Its subcellular location is the cytoplasm. The protein resides in the nucleus. The catalysed reaction is S-ubiquitinyl-[E2 ubiquitin-conjugating enzyme]-L-cysteine + [acceptor protein]-L-lysine = [E2 ubiquitin-conjugating enzyme]-L-cysteine + N(6)-ubiquitinyl-[acceptor protein]-L-lysine.. It participates in protein modification; protein ubiquitination. E3 ubiquitin and SUMO-protein ligase that plays a role in different biological processes such as innate immunity, inflammation or apoptosis. Potentiates MAP3K3-mediated activation of the NF-kappa-B, JUN/AP1 and DDIT3 transcriptional regulators. Negatively regulates MYB transcriptional activity by sequestering it to the cytosol via SUMOylation. Plays a role in the phosphorylation of MAPK1 and/or MAPK3, probably via its interaction with MAP3K3. Negatively regulates RLR-mediated innate immunity by promoting 'Lys-48'-linked ubiquitination of TBK1 through its RING domain to inhibit the cellular antiviral response. Promotes 'Lys-29'-linked polyubiquitination of NEMO/IKBKG and RELA leading to targeting these two proteins to lysosomal degradative pathways, reducing the transcriptional activity of NF-kappa-B. The sequence is that of E3 ubiquitin-protein ligase TRAF7 from Mus musculus (Mouse).